The sequence spans 713 residues: Mitochondrial intermediate peptidase (713 aa).

Residues 1-35 (MLCVGRLGGLGARAAALPPRRAGRGSLEAGIRARR) constitute a mitochondrion transit peptide. Residue K126 is modified to N6-acetyllysine. Position 495 (H495) interacts with Zn(2+). The active site involves E496. The Zn(2+) site is built by H499 and H502.

Belongs to the peptidase M3 family. As to quaternary structure, monomer. Requires Zn(2+) as cofactor.

It localises to the mitochondrion matrix. The catalysed reaction is Release of an N-terminal octapeptide as second stage of processing of some proteins imported into the mitochondrion.. Activity is divalent cation-dependent. It is stimulated by manganese, magnesium or calcium ions and reversibly inhibited by zinc, cobalt and iron. Functionally, cleaves proteins, imported into the mitochondrion, to their mature size. The chain is Mitochondrial intermediate peptidase (MIPEP) from Homo sapiens (Human).